The chain runs to 1252 residues: DNA-directed RNA polymerase subunit beta (1252 aa).

It belongs to the RNA polymerase beta chain family. The RNAP catalytic core consists of 2 alpha, 1 beta, 1 beta' and 1 omega subunit. When a sigma factor is associated with the core the holoenzyme is formed, which can initiate transcription.

The enzyme catalyses RNA(n) + a ribonucleoside 5'-triphosphate = RNA(n+1) + diphosphate. DNA-dependent RNA polymerase catalyzes the transcription of DNA into RNA using the four ribonucleoside triphosphates as substrates. The polypeptide is DNA-directed RNA polymerase subunit beta (Chlamydia abortus (strain DSM 27085 / S26/3) (Chlamydophila abortus)).